The sequence spans 134 residues: Profilin-3 (134 aa).

The cysteines at positions 13 and 118 are disulfide-linked. Positions 84–100 (AVIRGKKGSGGITIKKT) match the Involved in PIP2 interaction motif. T114 bears the Phosphothreonine mark.

It belongs to the profilin family. As to quaternary structure, occurs in many kinds of cells as a complex with monomeric actin in a 1:1 ratio. In terms of processing, phosphorylated by MAP kinases.

It localises to the cytoplasm. The protein localises to the cytoskeleton. Its function is as follows. Binds to actin and affects the structure of the cytoskeleton. At high concentrations, profilin prevents the polymerization of actin, whereas it enhances it at low concentrations. The protein is Profilin-3 of Olea europaea (Common olive).